The chain runs to 62 residues: Photosystem II reaction center protein Z (62 aa).

Helical transmembrane passes span 8–28 and 41–61; these read AVFALIATSSILLISVPVVFS and FSGTSLWIGLVFLVGILNSLI.

This sequence belongs to the PsbZ family. As to quaternary structure, PSII is composed of 1 copy each of membrane proteins PsbA, PsbB, PsbC, PsbD, PsbE, PsbF, PsbH, PsbI, PsbJ, PsbK, PsbL, PsbM, PsbT, PsbY, PsbZ, Psb30/Ycf12, at least 3 peripheral proteins of the oxygen-evolving complex and a large number of cofactors. It forms dimeric complexes.

The protein localises to the plastid. The protein resides in the chloroplast thylakoid membrane. May control the interaction of photosystem II (PSII) cores with the light-harvesting antenna, regulates electron flow through the 2 photosystem reaction centers. PSII is a light-driven water plastoquinone oxidoreductase, using light energy to abstract electrons from H(2)O, generating a proton gradient subsequently used for ATP formation. The chain is Photosystem II reaction center protein Z from Populus alba (White poplar).